A 1097-amino-acid chain; its full sequence is DNA-directed RNA polymerase subunit beta (1097 aa).

Positions 1072-1097 are disordered; the sequence is QDVNPRRSTPSRPTYESLGVADYDED.

Belongs to the RNA polymerase beta chain family. In cyanobacteria the RNAP catalytic core is composed of 2 alpha, 1 beta, 1 beta', 1 gamma and 1 omega subunit. When a sigma factor is associated with the core the holoenzyme is formed, which can initiate transcription.

The enzyme catalyses RNA(n) + a ribonucleoside 5'-triphosphate = RNA(n+1) + diphosphate. Its function is as follows. DNA-dependent RNA polymerase catalyzes the transcription of DNA into RNA using the four ribonucleoside triphosphates as substrates. This Synechococcus sp. (strain CC9902) protein is DNA-directed RNA polymerase subunit beta.